The following is a 219-amino-acid chain: Protein OPG170 (219 aa).

Positions 1–16 (MYSLLFIILMCIPFSF) are cleaved as a signal peptide. A glycan (N-linked (GlcNAc...) asparagine; by host) is linked at asparagine 70.

Belongs to the orthopoxvirus OPG170 family.

It localises to the secreted. Its function is as follows. May interact with several cellular chemokines to interfere with chemokine-glycosaminoglycan (GAG) interactions at the cell surface to alter chemotaxis of nearby responsive cells. The chain is Protein OPG170 (OPG170) from Vaccinia virus (strain Copenhagen) (VACV).